Reading from the N-terminus, the 230-residue chain is MADEKNKPENPDLDQRDINNPRDREALKQAADDFLKARRAEARAEAAADEAEGEVDETANRIAVLEADNTELKDQMLRVAAEMENLRKRTQRDVQDARAYAITNFARDMLSVSDNLRRALDTIPADALEADSNLKSLSEGVEMTERAMLLALERHGVKKLEPEGQKFDPNFHQAMFEVPNPDLPNNTVVQVVQAGYAIGDRVLRPAMVGVSKGGPKVSAENGASTSEDNA.

Disordered stretches follow at residues 1–28 and 209–230; these read MADEKNKPENPDLDQRDINNPRDREALK and GVSKGGPKVSAENGASTSEDNA. The segment covering 221-230 has biased composition (polar residues); sequence NGASTSEDNA.

It belongs to the GrpE family. In terms of assembly, homodimer.

Its subcellular location is the cytoplasm. Functionally, participates actively in the response to hyperosmotic and heat shock by preventing the aggregation of stress-denatured proteins, in association with DnaK and GrpE. It is the nucleotide exchange factor for DnaK and may function as a thermosensor. Unfolded proteins bind initially to DnaJ; upon interaction with the DnaJ-bound protein, DnaK hydrolyzes its bound ATP, resulting in the formation of a stable complex. GrpE releases ADP from DnaK; ATP binding to DnaK triggers the release of the substrate protein, thus completing the reaction cycle. Several rounds of ATP-dependent interactions between DnaJ, DnaK and GrpE are required for fully efficient folding. The polypeptide is Protein GrpE (Brucella ovis (strain ATCC 25840 / 63/290 / NCTC 10512)).